A 108-amino-acid chain; its full sequence is Large ribosomal subunit protein uL24 (108 aa).

Residues 46–65 (RHTRVQQSSRGSQSGGIVTQ) form a disordered region. Residues 51–61 (QQSSRGSQSGG) are compositionally biased toward low complexity.

This sequence belongs to the universal ribosomal protein uL24 family. In terms of assembly, part of the 50S ribosomal subunit.

One of two assembly initiator proteins, it binds directly to the 5'-end of the 23S rRNA, where it nucleates assembly of the 50S subunit. In terms of biological role, one of the proteins that surrounds the polypeptide exit tunnel on the outside of the subunit. The chain is Large ribosomal subunit protein uL24 from Parafrankia sp. (strain EAN1pec).